The primary structure comprises 89 residues: Exodeoxyribonuclease 7 small subunit (89 aa).

Residues 1 to 23 (MRPWRCVSMAKAPAAPSSTQPDP) form a disordered region.

This sequence belongs to the XseB family. Heterooligomer composed of large and small subunits.

Its subcellular location is the cytoplasm. The enzyme catalyses Exonucleolytic cleavage in either 5'- to 3'- or 3'- to 5'-direction to yield nucleoside 5'-phosphates.. Functionally, bidirectionally degrades single-stranded DNA into large acid-insoluble oligonucleotides, which are then degraded further into small acid-soluble oligonucleotides. This chain is Exodeoxyribonuclease 7 small subunit, found in Acidovorax sp. (strain JS42).